A 125-amino-acid chain; its full sequence is MKTVIFILGFAFVAILIPTNGESMADADAMADADANAMSDASAYPDASSDALALANPEARAEAMAEAMAKALGDAVAEAQARAMAAAYAAAGKEKDKLIECTKEMLLAAMDYAKHKIEKHLFKCK.

The signal sequence occupies residues 1 to 21; that stretch reads MKTVIFILGFAFVAILIPTNG. Residues 22–91 constitute a propeptide that is removed on maturation; sequence ESMADADAMA…RAMAAAYAAA (70 aa). Cysteines 101 and 124 form a disulfide.

It belongs to the formicidae venom precursor-01 superfamily. Expressed by the venom gland.

It localises to the secreted. It is found in the target cell membrane. Its function is as follows. Neurotoxin that causes irreversible rapid flaccid paralysis in blowflies and honeybees upon intrathoracic injection. Causes a quick and irreversible cytolytic effect (at 10 uM) indicating it possibly acts as a pore-forming peptide. Shows only weak effect on aphids (A.pisum) at high doses 24 hours post intrathoracic injection. In vitro, is not cytotoxic on the dipteran S2 Drosophila embryonic cell line. This is U11-myrmicitoxin-Ta1a from Tetramorium africanum (Fierce ant).